The primary structure comprises 300 residues: MTAVLPLPLPLADPAPRTPRLQREPLRLAKRLRHAVGQAIADFGMIAPGDKVMVCLSGGKDSYTLLDMLLQLQRSAPVPFTLVAVNLDQKQPDFPADVLPTYLRAQQVPFDIIEQDTYSVVSRVIPQGKTMCSLCSRLRRGALYAYAQAHGVTKIALGHHRDDIVATFFMNLFHHARLAAMAPKLRSDDGAHVVIRPLAYVREADIAAYAQARHFPIIPCNLCGSQENLQRQQVGRMLQQWDREQPGRVDQIARALGDVRPEQLADRTLFDFPGLGGGADAPLPDAAGWLAGSAAEHARD.

Positions 57–62 (SGGKDS) match the PP-loop motif motif. Cysteine 132, cysteine 135, and cysteine 223 together coordinate [4Fe-4S] cluster.

This sequence belongs to the TtcA family. As to quaternary structure, homodimer. It depends on Mg(2+) as a cofactor. [4Fe-4S] cluster serves as cofactor.

The protein localises to the cytoplasm. The catalysed reaction is cytidine(32) in tRNA + S-sulfanyl-L-cysteinyl-[cysteine desulfurase] + AH2 + ATP = 2-thiocytidine(32) in tRNA + L-cysteinyl-[cysteine desulfurase] + A + AMP + diphosphate + H(+). It participates in tRNA modification. Functionally, catalyzes the ATP-dependent 2-thiolation of cytidine in position 32 of tRNA, to form 2-thiocytidine (s(2)C32). The sulfur atoms are provided by the cysteine/cysteine desulfurase (IscS) system. The protein is tRNA-cytidine(32) 2-sulfurtransferase of Xanthomonas campestris pv. campestris (strain B100).